A 133-amino-acid chain; its full sequence is Small ribosomal subunit protein bS18 (133 aa).

The segment at 1–63 (MARPDMGGPK…GDEGGGRRGF (63 aa)) is disordered. Gly residues predominate over residues 9–39 (PKTGGFGGPRSGGFGGGGGGGFGGGGFGGGR). A compositionally biased stretch (basic and acidic residues) spans 40 to 59 (GGDRGDRGDRDDRGGDEGGG).

Belongs to the bacterial ribosomal protein bS18 family. As to quaternary structure, part of the 30S ribosomal subunit. Forms a tight heterodimer with protein bS6.

Its function is as follows. Binds as a heterodimer with protein bS6 to the central domain of the 16S rRNA, where it helps stabilize the platform of the 30S subunit. The protein is Small ribosomal subunit protein bS18 of Anaeromyxobacter dehalogenans (strain 2CP-1 / ATCC BAA-258).